A 417-amino-acid chain; its full sequence is UDP-N-acetylglucosamine 1-carboxyvinyltransferase (417 aa).

22–23 contributes to the phosphoenolpyruvate binding site; the sequence is KN. UDP-N-acetyl-alpha-D-glucosamine is bound at residue R92. C116 (proton donor) is an active-site residue. C116 is modified (2-(S-cysteinyl)pyruvic acid O-phosphothioketal). Residues 121–125, D306, and I328 contribute to the UDP-N-acetyl-alpha-D-glucosamine site; that span reads RPIDL.

Belongs to the EPSP synthase family. MurA subfamily.

It is found in the cytoplasm. It catalyses the reaction phosphoenolpyruvate + UDP-N-acetyl-alpha-D-glucosamine = UDP-N-acetyl-3-O-(1-carboxyvinyl)-alpha-D-glucosamine + phosphate. The protein operates within cell wall biogenesis; peptidoglycan biosynthesis. Functionally, cell wall formation. Adds enolpyruvyl to UDP-N-acetylglucosamine. The polypeptide is UDP-N-acetylglucosamine 1-carboxyvinyltransferase (Buchnera aphidicola subsp. Schizaphis graminum (strain Sg)).